Consider the following 411-residue polypeptide: MINKNYSLSLWLKYLEQLDKKRIYNLTELKFLAKKLGLLKSESFIFTVAGTNGKGTTCAVLERLLLDSGYQVGLYTSPHLINFVERVRINGFVLHEEEHIDSFQNVELVRNGVLLTYFEFITLAALILFKRYSLDCIILKVGLGGRLDATNIIDSDISIITNIGIDHTSILGRDRISIAREKCGVFRKNKISVIGETDIPCSMYQIAKEKKTILKKIDIDWSWEKKRNYWNFFHSTIQLYNLPETQVPLSSAATALSTLYYSRFKIKEKIIRKSISNVQLPGRFQVISTFPYIIVDVAHNPNAAFYLSQKIDEINITGKIYAVVGILKDKDILGIIDPLANKIHHWFTAPLKTIRTATKHELKKFFPIHNTSILKSIEIAYKKALILVKKEDAIIIFGSFLTVSEFLSLKI.

53 to 56 (GKGT) lines the ATP pocket. S77 contributes to the Mg(2+) binding site. Residues 116–119 (TYFE) and 147–149 (LDA) each bind 7,8-dihydropteroate. H167 lines the Mg(2+) pocket. ATP-binding residues include R283 and D296.

It belongs to the folylpolyglutamate synthase family. In terms of assembly, monomer. Mg(2+) serves as cofactor.

It catalyses the reaction 7,8-dihydropteroate + L-glutamate + ATP = 7,8-dihydrofolate + ADP + phosphate + H(+). The catalysed reaction is (6S)-5,6,7,8-tetrahydrofolyl-(gamma-L-Glu)(n) + L-glutamate + ATP = (6S)-5,6,7,8-tetrahydrofolyl-(gamma-L-Glu)(n+1) + ADP + phosphate + H(+). It carries out the reaction 10-formyltetrahydrofolyl-(gamma-L-Glu)(n) + L-glutamate + ATP = 10-formyltetrahydrofolyl-(gamma-L-Glu)(n+1) + ADP + phosphate + H(+). The enzyme catalyses (6R)-5,10-methylenetetrahydrofolyl-(gamma-L-Glu)(n) + L-glutamate + ATP = (6R)-5,10-methylenetetrahydrofolyl-(gamma-L-Glu)(n+1) + ADP + phosphate + H(+). It functions in the pathway cofactor biosynthesis; tetrahydrofolate biosynthesis; 7,8-dihydrofolate from 2-amino-4-hydroxy-6-hydroxymethyl-7,8-dihydropteridine diphosphate and 4-aminobenzoate: step 2/2. The protein operates within cofactor biosynthesis; tetrahydrofolylpolyglutamate biosynthesis. Its function is as follows. Functions in two distinct reactions of the de novo folate biosynthetic pathway. Catalyzes the addition of a glutamate residue to dihydropteroate (7,8-dihydropteroate or H2Pte) to form dihydrofolate (7,8-dihydrofolate monoglutamate or H2Pte-Glu). Also catalyzes successive additions of L-glutamate to tetrahydrofolate or 10-formyltetrahydrofolate or 5,10-methylenetetrahydrofolate, leading to folylpolyglutamate derivatives. In Buchnera aphidicola subsp. Acyrthosiphon pisum (strain APS) (Acyrthosiphon pisum symbiotic bacterium), this protein is Dihydrofolate synthase/folylpolyglutamate synthase (folC).